Here is a 354-residue protein sequence, read N- to C-terminus: Neutral protease 2 homolog BCIN_12g06300 (354 aa).

An N-terminal signal peptide occupies residues 1–19 (MRSFSKILAVASLAAIANS). A propeptide spanning residues 20–179 (AVLKRDNNVL…PSSIDRRTVL (160 aa)) is cleaved from the precursor. Intrachain disulfides connect cysteine 183–cysteine 255 and cysteine 262–cysteine 280. Histidine 305 contacts Zn(2+). Glutamate 306 is a catalytic residue. Zn(2+) is bound by residues histidine 309 and aspartate 320.

Belongs to the peptidase M35 family. Requires Zn(2+) as cofactor.

It localises to the secreted. The catalysed reaction is Preferential cleavage of bonds with hydrophobic residues in P1'. Also 3-Asn-|-Gln-4 and 8-Gly-|-Ser-9 bonds in insulin B chain.. Secreted metalloproteinase that allows assimilation of proteinaceous substrates. Shows high activities on basic nuclear substrates such as histone and protamine. The chain is Neutral protease 2 homolog BCIN_12g06300 from Botryotinia fuckeliana (strain B05.10) (Noble rot fungus).